A 570-amino-acid chain; its full sequence is Peptidyl-prolyl cis-trans isomerase CYP63 (570 aa).

One can recognise a PPIase cyclophilin-type domain in the interval 10 to 174 (FLDVSIGGDP…SPVKIIDCGE (165 aa)). The disordered stretch occupies residues 180–570 (AHDAAEREKG…GKRGLVSYAD (391 aa)). Residues 203–219 (VSDREAKETRKKESNEK) show a composition bias toward basic and acidic residues. 2 stretches are compositionally biased toward low complexity: residues 229 to 238 (SSDSYSSSSD) and 246 to 259 (EAYSSSSYESSSSS). The span at 262-292 (KHRKRKSTTRHKGRRGERKSKGRSGKKKARP) shows a compositional bias: basic residues. The segment covering 297-309 (STNSSSDTESSSS) has biased composition (low complexity). Basic and acidic residues predominate over residues 323–339 (VKVDNADQHANLDDSVK). At Ser340 the chain carries Phosphoserine. Basic residues predominate over residues 340-351 (SRSRSPIRRRNQ). Low complexity predominate over residues 352–365 (NSRSKSPSRSPVRV). Basic and acidic residues-rich tracts occupy residues 387 to 397 (SPREKPTEETV) and 437 to 467 (SPPRHWPDRRNFQDRNRDRYPSNRSYSERSP). The span at 468–490 (RGRFRSPPRRRSPPRYNRRRRST) shows a compositional bias: basic residues. Residues 495 to 505 (DGYRRRLRDGS) are compositionally biased toward basic and acidic residues. Residues 509 to 523 (SPRHRSRSQSPRKRQ) show a composition bias toward basic residues. A compositionally biased stretch (low complexity) spans 546 to 555 (SPAESLSPSH).

It belongs to the cyclophilin-type PPIase family. In terms of assembly, interacts with SNRNP35, RNU1, SCL28, SCL30, SR30 and SR34. The binding to SR34 is phosphorylation-dependent. In terms of tissue distribution, ubiquitous.

The protein localises to the nucleus. It is found in the nucleoplasm. The protein resides in the nucleus speckle. The catalysed reaction is [protein]-peptidylproline (omega=180) = [protein]-peptidylproline (omega=0). PPIases accelerate the folding of proteins. It catalyzes the cis-trans isomerization of proline imidic peptide bonds in oligopeptides. May be implicated in the folding, transport, and assembly of proteins. Probably involved in early steps of spliceosomal assembly. The sequence is that of Peptidyl-prolyl cis-trans isomerase CYP63 (CYP63) from Arabidopsis thaliana (Mouse-ear cress).